The sequence spans 134 residues: Large ribosomal subunit protein bL17 (134 aa).

The protein belongs to the bacterial ribosomal protein bL17 family. In terms of assembly, part of the 50S ribosomal subunit. Contacts protein L32.

The chain is Large ribosomal subunit protein bL17 from Aromatoleum aromaticum (strain DSM 19018 / LMG 30748 / EbN1) (Azoarcus sp. (strain EbN1)).